The following is a 291-amino-acid chain: ATP synthase gamma chain (291 aa).

The protein belongs to the ATPase gamma chain family. F-type ATPases have 2 components, CF(1) - the catalytic core - and CF(0) - the membrane proton channel. CF(1) has five subunits: alpha(3), beta(3), gamma(1), delta(1), epsilon(1). CF(0) has three main subunits: a, b and c.

Its subcellular location is the cell inner membrane. In terms of biological role, produces ATP from ADP in the presence of a proton gradient across the membrane. The gamma chain is believed to be important in regulating ATPase activity and the flow of protons through the CF(0) complex. The polypeptide is ATP synthase gamma chain (Ruegeria sp. (strain TM1040) (Silicibacter sp.)).